The sequence spans 235 residues: Adenosine 5'-phosphosulfate reductase (235 aa).

4 residues coordinate [4Fe-4S] cluster: cysteine 121, cysteine 122, cysteine 204, and cysteine 207. Cysteine 230 serves as the catalytic Nucleophile; cysteine thiosulfonate intermediate.

Belongs to the PAPS reductase family. CysH subfamily. It depends on [4Fe-4S] cluster as a cofactor.

The protein resides in the cytoplasm. It carries out the reaction [thioredoxin]-disulfide + sulfite + AMP + 2 H(+) = adenosine 5'-phosphosulfate + [thioredoxin]-dithiol. It participates in sulfur metabolism; hydrogen sulfide biosynthesis; sulfite from sulfate. Functionally, catalyzes the formation of sulfite from adenosine 5'-phosphosulfate (APS) using thioredoxin as an electron donor. This Geobacillus kaustophilus (strain HTA426) protein is Adenosine 5'-phosphosulfate reductase.